Here is a 64-residue protein sequence, read N- to C-terminus: DNA gyrase inhibitor YacG (64 aa).

4 residues coordinate Zn(2+): Cys7, Cys10, Cys26, and Cys30. Residues 43–64 (KRIPGPINPDLLPYPDEGEQWQ) form a disordered region.

The protein belongs to the DNA gyrase inhibitor YacG family. As to quaternary structure, interacts with GyrB. Zn(2+) serves as cofactor.

Its function is as follows. Inhibits all the catalytic activities of DNA gyrase by preventing its interaction with DNA. Acts by binding directly to the C-terminal domain of GyrB, which probably disrupts DNA binding by the gyrase. This chain is DNA gyrase inhibitor YacG, found in Aeromonas salmonicida (strain A449).